A 940-amino-acid polypeptide reads, in one-letter code: Isoleucine--tRNA ligase (940 aa).

The 'HIGH' region motif lies at 58–68 (PYANGDIHIGH). An L-isoleucyl-5'-AMP-binding site is contributed by Glu564. The 'KMSKS' region signature appears at 605 to 609 (KMSKS). Lys608 provides a ligand contact to ATP. Residues Cys903, Cys906, Cys923, and Cys926 each coordinate Zn(2+).

This sequence belongs to the class-I aminoacyl-tRNA synthetase family. IleS type 1 subfamily. In terms of assembly, monomer. Zn(2+) is required as a cofactor.

The protein localises to the cytoplasm. The enzyme catalyses tRNA(Ile) + L-isoleucine + ATP = L-isoleucyl-tRNA(Ile) + AMP + diphosphate. In terms of biological role, catalyzes the attachment of isoleucine to tRNA(Ile). As IleRS can inadvertently accommodate and process structurally similar amino acids such as valine, to avoid such errors it has two additional distinct tRNA(Ile)-dependent editing activities. One activity is designated as 'pretransfer' editing and involves the hydrolysis of activated Val-AMP. The other activity is designated 'posttransfer' editing and involves deacylation of mischarged Val-tRNA(Ile). In Shewanella pealeana (strain ATCC 700345 / ANG-SQ1), this protein is Isoleucine--tRNA ligase.